We begin with the raw amino-acid sequence, 548 residues long: T-complex protein 1 subunit theta (548 aa).

Residues 528–548 (ATGGPKPRGPKQQDEDDDGMA) form a disordered region.

This sequence belongs to the TCP-1 chaperonin family. In terms of assembly, heterooligomeric complex.

Its subcellular location is the cytoplasm. In terms of biological role, molecular chaperone; assists the folding of proteins upon ATP hydrolysis. Known to play a role, in vitro, in the folding of actin and tubulin. Required for correct subcellular localization of pgl-1. This Caenorhabditis briggsae protein is T-complex protein 1 subunit theta.